The sequence spans 311 residues: Olfactory receptor 4K1 (311 aa).

At 1 to 25 (MAHTNESMVSEFVLLGLSNSWGLQL) the chain is on the extracellular side. A glycan (N-linked (GlcNAc...) asparagine) is linked at asparagine 5. A helical membrane pass occupies residues 26–49 (FFFAIFSIVYVTSVLGNVLIIVII). At 50–57 (SFDSHLNS) the chain is on the cytoplasmic side. Residues 58–79 (PMYFLLSNLSFIDICQSNFATP) traverse the membrane as a helical segment. Topologically, residues 80-100 (KMLVDFFIERKTISFEGCMAQ) are extracellular. Cysteine 97 and cysteine 189 are disulfide-bonded. The chain crosses the membrane as a helical span at residues 101 to 120 (IFVLHSFVGSEMMLLVAMAY). Over 121–139 (DRFIAICKPLHYSTIMNRR) the chain is Cytoplasmic. Residues 140-158 (LCVIFVSISWAVGVLHSVS) traverse the membrane as a helical segment. Residues 159–195 (HLAFTVDLPFCGPNEVDSFFCDLPLVIELACMDTYEM) lie on the Extracellular side of the membrane. A helical transmembrane segment spans residues 196 to 219 (EIMTLTNSGLISLSCFLALIISYT). Topologically, residues 220–235 (IILIGVRCRSSSGSSK) are cytoplasmic. The helical transmembrane segment at 236–258 (ALSTLTAHITVVILFFGPCIYFY) threads the bilayer. At 259 to 269 (IWPFSRLPVDK) the chain is on the extracellular side. A helical transmembrane segment spans residues 270–289 (FLSVFYTVCTPLLNPIIYSL). At 290–311 (RNEDVKAAMWKLRNRHVNSWKN) the chain is on the cytoplasmic side.

It belongs to the G-protein coupled receptor 1 family.

It localises to the cell membrane. In terms of biological role, odorant receptor. The protein is Olfactory receptor 4K1 (OR4K1) of Homo sapiens (Human).